Here is a 314-residue protein sequence, read N- to C-terminus: Large ribosomal subunit protein uL10 (314 aa).

The disordered stretch occupies residues Gly-285–Gly-314. The segment covering Ala-293–Gly-308 has biased composition (acidic residues). Ser-303 carries the phosphoserine; by CK1 modification.

Belongs to the universal ribosomal protein uL10 family. In terms of assembly, component of the large ribosomal subunit. P0 forms a pentameric complex by interaction with dimers of P1 and P2. In terms of processing, phosphorylated.

Ribosomal protein P0 is the functional equivalent of E.coli protein L10. This is Large ribosomal subunit protein uL10 from Podospora anserina (Pleurage anserina).